The following is a 320-amino-acid chain: MENRNTFSWVKEQMTRSISVSIMIYVITQTSISNAYPIFAQQGYENPREATGRIVCANCHLASKPVDIEVPQAVLPDTVFEAVLRIPYDMQLKQVLANGKKGGLNVGAVLILPEGFELAPPDRISPELKEKIGNLSFQSYRPDKKNILVIGPVPGKKYSEIVFPILSPDPATKKDAYFLKYPIYVGGNRGRGQIYPDGSKSNNTVYNATSTGIVRKILRKEKGGYEISIVDASDGRQVIDTIPPGPELLVSEGESIKLDQPLTSNPNVGGFGQGDAEIVLQDPLRVQGLLFFFASVILAQVFLVLKKKQFEKVQLYEMNF.

The signal sequence occupies residues 1–35 (MENRNTFSWVKEQMTRSISVSIMIYVITQTSISNA). Residues tyrosine 36, cysteine 56, cysteine 59, and histidine 60 each coordinate heme. Residues 286–306 (VQGLLFFFASVILAQVFLVLK) traverse the membrane as a helical segment.

It belongs to the cytochrome f family. As to quaternary structure, the 4 large subunits of the cytochrome b6-f complex are cytochrome b6, subunit IV (17 kDa polypeptide, petD), cytochrome f and the Rieske protein, while the 4 small subunits are PetG, PetL, PetM and PetN. The complex functions as a dimer. Heme is required as a cofactor.

It is found in the plastid. The protein resides in the chloroplast thylakoid membrane. Its function is as follows. Component of the cytochrome b6-f complex, which mediates electron transfer between photosystem II (PSII) and photosystem I (PSI), cyclic electron flow around PSI, and state transitions. The polypeptide is Cytochrome f (Agrostis stolonifera (Creeping bentgrass)).